The following is a 394-amino-acid chain: Phosphoglycerate kinase (394 aa).

Residues 21-23 (DLN), R36, 60-63 (HLGN), R114, and R147 contribute to the substrate site. Residues K198, E315, and 341–344 (GGET) contribute to the ATP site.

The protein belongs to the phosphoglycerate kinase family. In terms of assembly, monomer.

It localises to the cytoplasm. It catalyses the reaction (2R)-3-phosphoglycerate + ATP = (2R)-3-phospho-glyceroyl phosphate + ADP. It functions in the pathway carbohydrate degradation; glycolysis; pyruvate from D-glyceraldehyde 3-phosphate: step 2/5. This Wigglesworthia glossinidia brevipalpis protein is Phosphoglycerate kinase.